The chain runs to 121 residues: Met-lysine-1b (121 aa).

Positions 1–22 are cleaved as a signal peptide; sequence MKSFVFALALIVAFACISESKS. A propeptide spanning residues 23 to 69 is cleaved from the precursor; sequence DHTGYEEEENLEDSELTDLVAAALLEELAEASEMDDLSYTEEAGGER. M120 bears the Methionine amide mark.

In terms of tissue distribution, expressed by the venom gland.

Its subcellular location is the secreted. In terms of biological role, shows no antimicrobial activity against Gram-positive bacterium B.subtilis B-501 or Gram-negative bacterium E.coli DH5-alpha at concentrations up to 20 ug/ml. Shows no toxicity towards insect (S.carnaria) larvae. The chain is Met-lysine-1b from Lachesana tarabaevi (Spider).